The primary structure comprises 221 residues: DNA mismatch repair protein MutH (221 aa).

It belongs to the MutH family.

It localises to the cytoplasm. Its function is as follows. Sequence-specific endonuclease that cleaves unmethylated GATC sequences. It is involved in DNA mismatch repair. In Vibrio cholerae serotype O1 (strain ATCC 39315 / El Tor Inaba N16961), this protein is DNA mismatch repair protein MutH.